A 173-amino-acid chain; its full sequence is RNA pyrophosphohydrolase (173 aa).

The 144-residue stretch at 6–149 folds into the Nudix hydrolase domain; the sequence is GFRANVGIII…KRDVYRKVMK (144 aa). Positions 38 to 59 match the Nudix box motif; it reads GGVDDGESAEEAMYRELYEEVG.

The protein belongs to the Nudix hydrolase family. RppH subfamily. A divalent metal cation serves as cofactor.

Functionally, accelerates the degradation of transcripts by removing pyrophosphate from the 5'-end of triphosphorylated RNA, leading to a more labile monophosphorylated state that can stimulate subsequent ribonuclease cleavage. This Shewanella pealeana (strain ATCC 700345 / ANG-SQ1) protein is RNA pyrophosphohydrolase.